Consider the following 288-residue polypeptide: Acidic endochitinase SP2 (288 aa).

The first 27 residues, 1–27, serve as a signal peptide directing secretion; the sequence is MTLLLKNTLYLALIISVISSFPTSLFA. The residue at position 28 (Q28) is a Pyrrolidone carboxylic acid. Residues 28–63 enclose the Chitin-binding type-1 domain; the sequence is QNCGCAPNLCCSNFGFCGTGTPYCGVGNCQSGPCEG. Disulfide bonds link C30–C38, C32–C44, C37–C51, and C56–C61. Low complexity predominate over residues 64–78; that stretch reads GTPTTPTTPTTPTTP. The disordered stretch occupies residues 64 to 84; it reads GTPTTPTTPTTPTTPGTGGGG. Positions 64–85 are hinge region (Gly/Pro/Thr-rich); it reads GTPTTPTTPTTPTTPGTGGGGS. A 4-hydroxyproline mark is found at P66, P69, P72, and P75. 4 consecutive repeat copies span residues 67-69, 70-72, 73-75, and 76-78. The 4 X 3 AA tandem repeats of T-T-P stretch occupies residues 67–78; sequence TTPTTPTTPTTP. A catalytic region spans residues 86-288; the sequence is SVSDIVSQAF…GVAPGDNLTC (203 aa). 3 cysteine pairs are disulfide-bonded: C107-C154, C168-C178, and C256-C288. The active-site Proton donor is E149.

This sequence belongs to the glycosyl hydrolase 19 family. Chitinase class I subfamily. O-glycosylated on hydroxyprolines; contains xylose. Localized to infected area.

The protein resides in the secreted. It is found in the extracellular space. The enzyme catalyses Random endo-hydrolysis of N-acetyl-beta-D-glucosaminide (1-&gt;4)-beta-linkages in chitin and chitodextrins.. Its function is as follows. Defense against chitin-containing fungal pathogens. This chain is Acidic endochitinase SP2 (SP2), found in Beta vulgaris (Sugar beet).